We begin with the raw amino-acid sequence, 205 residues long: uncharacterized protein (205 aa).

Residues 72–114 (ARVSPYGYESDSENEEYTRISSATSSNVLTDSPTTTQDDPTGR) are disordered. The span at 90-100 (RISSATSSNVL) shows a compositional bias: polar residues. Residues 101–110 (TDSPTTTQDD) show a composition bias toward low complexity.

This is an uncharacterized protein from Equus caballus (Horse).